The primary structure comprises 173 residues: MARVEL domain-containing protein 1 (173 aa).

M1 carries the N-acetylmethionine modification. Over 1–29 the chain is Cytoplasmic; that stretch reads MLPPPPRQPPPQARAARGAVRLQRPFLRS. The region spanning 26–166 is the MARVEL domain; it reads FLRSPLGVLR…SALYGCGRRC (141 aa). Residues 30–50 traverse the membrane as a helical segment; sequence PLGVLRLLQLLAGAAFWITIA. Topologically, residues 51-59 are extracellular; sequence TSKYQGPVH. The helical transmembrane segment at 60 to 80 threads the bilayer; the sequence is FALFVSVLFWLLTLGLYFLTL. Over 81 to 94 the chain is Cytoplasmic; it reads LGKHELVPVLGSRW. The chain crosses the membrane as a helical span at residues 95 to 115; sequence LMVNVAHDVLAAALYGAATGI. Residues 116–138 lie on the Extracellular side of the membrane; sequence MSDQMQRHSYCNLKDYPLPCAYH. Residues 139–159 form a helical membrane-spanning segment; that stretch reads AFLAAAVCGGVCHGLYLLSAL. At 160–173 the chain is on the cytoplasmic side; sequence YGCGRRCQGKQEVA.

In terms of tissue distribution, widely expressed in normal tissues. Down-regulated in multiple primary tumors.

The protein localises to the cell membrane. The protein resides in the cytoplasm. Its subcellular location is the cytoskeleton. It localises to the nucleus. In terms of biological role, microtubule-associated protein that exhibits cell cycle-dependent localization and can inhibit cell proliferation and migration. The polypeptide is MARVEL domain-containing protein 1 (MARVELD1) (Homo sapiens (Human)).